We begin with the raw amino-acid sequence, 178 residues long: MRTLALSLGLALLCLLHAKAAATVPDRSEIAGKWYVVALASNTEFFLREKDKMKMAMARISFLGEDELKVSYAVPKPNGCRKWETTFKKTSDDGEVYYSEEAKKKVEVLDTDYKSYAVIYATRVKDGRTLHMMRLYSRSPEVSPAATAIFRKLAGERNYTDEMVAMLPRQEECTVDEV.

Positions 1–20 (MRTLALSLGLALLCLLHAKA) are cleaved as a signal peptide. Enterobactin is bound at residue threonine 43. Residues tyrosine 72 and lysine 104 each coordinate 1-tetradecanoyl-sn-glycerol 3-phosphate. A disulfide bridge links cysteine 80 with cysteine 173. Lysine 104, arginine 123, and arginine 134 together coordinate enterobactin. 134-136 (RLY) serves as a coordination point for 1-tetradecanoyl-sn-glycerol 3-phosphate.

The protein belongs to the calycin superfamily. Lipocalin family. In terms of assembly, monomer.

Its subcellular location is the secreted. Functionally, siderocalin-like lipocalin tightly binding a variety of bacterial ferric siderophores, also binds long-chain unsaturated fatty acids such as linoleic acid, oleic acid, arachidonic acid and, with a lower affinity, long chain saturated fatty acids such as steraic acid. May act as an antibacterial factor, through dual ligand specificity, both as a siderophore-sequestrating molecule and a lysophosphatidic acid (LPA) sensor. This Coturnix japonica (Japanese quail) protein is Extracellular fatty acid-binding protein.